Here is a 232-residue protein sequence, read N- to C-terminus: Lipoprotein-releasing system ATP-binding protein LolD (232 aa).

The 221-residue stretch at 11 to 231 folds into the ABC transporter domain; the sequence is VYLHDIKRQY…SIEDGVIVEL (221 aa). 47–54 is a binding site for ATP; the sequence is APSGSGKS.

It belongs to the ABC transporter superfamily. Lipoprotein translocase (TC 3.A.1.125) family. In terms of assembly, the complex is composed of two ATP-binding proteins (LolD) and two transmembrane proteins (LolC and LolE).

It is found in the cell inner membrane. Functionally, part of the ABC transporter complex LolCDE involved in the translocation of mature outer membrane-directed lipoproteins, from the inner membrane to the periplasmic chaperone, LolA. Responsible for the formation of the LolA-lipoprotein complex in an ATP-dependent manner. The polypeptide is Lipoprotein-releasing system ATP-binding protein LolD (Rhodopseudomonas palustris (strain BisB5)).